The following is a 435-amino-acid chain: Methylenetetrahydrofolate--tRNA-(uracil-5-)-methyltransferase TrmFO (435 aa).

7-12 (GAGLAG) serves as a coordination point for FAD.

This sequence belongs to the MnmG family. TrmFO subfamily. The cofactor is FAD.

The protein resides in the cytoplasm. It catalyses the reaction uridine(54) in tRNA + (6R)-5,10-methylene-5,6,7,8-tetrahydrofolate + NADH + H(+) = 5-methyluridine(54) in tRNA + (6S)-5,6,7,8-tetrahydrofolate + NAD(+). The enzyme catalyses uridine(54) in tRNA + (6R)-5,10-methylene-5,6,7,8-tetrahydrofolate + NADPH + H(+) = 5-methyluridine(54) in tRNA + (6S)-5,6,7,8-tetrahydrofolate + NADP(+). In terms of biological role, catalyzes the folate-dependent formation of 5-methyl-uridine at position 54 (M-5-U54) in all tRNAs. The sequence is that of Methylenetetrahydrofolate--tRNA-(uracil-5-)-methyltransferase TrmFO from Thermotoga sp. (strain RQ2).